The primary structure comprises 1077 residues: Serine/threonine-protein kinase sel-5 (1077 aa).

The Protein kinase domain maps to 47–317 (VTIEKQIAEG…IYQTSVLAFE (271 aa)). Residues 53 to 61 (IAEGGFAIV) and K75 each bind ATP. D178 serves as the catalytic Proton acceptor. Disordered regions lie at residues 347–444 (MRDG…TDGS), 488–554 (GFTD…SQVV), 616–813 (ELDS…TNPF), and 920–1077 (LISV…PTDL). Residues 369–399 (IQSSSKMASLSQQVPSISNISMPSGSGTVET) show a composition bias toward polar residues. A compositionally biased stretch (basic and acidic residues) spans 491–515 (DLDKPALPRDRAQTDGKRRLPHESD). A compositionally biased stretch (low complexity) spans 541-554 (SSQQTTSKTSSQVV). Positions 638–648 (LTVSTSSSAQP) are enriched in polar residues. Positions 655–679 (TDEDDERQLLSETDEEEKYEIDEKE) are enriched in acidic residues. Composition is skewed to basic and acidic residues over residues 697–708 (DEQRMNDRRRYS) and 739–751 (DSRR…HDED). Acidic residues predominate over residues 770-780 (EDDGLEDDDDH). Residues 799–810 (GTSTPHTQNPIT) are compositionally biased toward polar residues. Residues 927 to 936 (TDPPPPPLPK) are compositionally biased toward pro residues. Residues 941–950 (ASPTQETTAT) are compositionally biased toward polar residues. Residues 960 to 969 (KLLKKEKKKE) are compositionally biased toward basic residues. Residues 970-989 (KKDGKKDKLKLEEYREKGSS) are compositionally biased toward basic and acidic residues. A compositionally biased stretch (polar residues) spans 1054-1067 (LTGKNASFVNTSFQ).

Belongs to the protein kinase superfamily. Ser/Thr protein kinase family. The cofactor is Mg(2+).

It is found in the cytoplasm. The catalysed reaction is L-seryl-[protein] + ATP = O-phospho-L-seryl-[protein] + ADP + H(+). It carries out the reaction L-threonyl-[protein] + ATP = O-phospho-L-threonyl-[protein] + ADP + H(+). Serine/threonine-protein kinase which may play a role in lin-12-mediated cell-fate decisions. The sequence is that of Serine/threonine-protein kinase sel-5 from Caenorhabditis elegans.